The chain runs to 379 residues: Glucose-1-phosphate adenylyltransferase (379 aa).

Residues G164, 179–180 (EK), and S190 contribute to the alpha-D-glucose 1-phosphate site.

This sequence belongs to the bacterial/plant glucose-1-phosphate adenylyltransferase family. Homotetramer.

The enzyme catalyses alpha-D-glucose 1-phosphate + ATP + H(+) = ADP-alpha-D-glucose + diphosphate. Its pathway is glycan biosynthesis; glycogen biosynthesis. Its function is as follows. Involved in the biosynthesis of ADP-glucose, a building block required for the elongation reactions to produce glycogen. Catalyzes the reaction between ATP and alpha-D-glucose 1-phosphate (G1P) to produce pyrophosphate and ADP-Glc. This Streptococcus uberis (strain ATCC BAA-854 / 0140J) protein is Glucose-1-phosphate adenylyltransferase.